We begin with the raw amino-acid sequence, 336 residues long: Aldehyde reductase AdhA (336 aa).

Residues Cys36, Cys39, His61, Cys92, Cys95, Cys98, Cys106, and Cys148 each coordinate Zn(2+).

Belongs to the zinc-containing alcohol dehydrogenase family. As to quaternary structure, homotetramer. Zn(2+) serves as cofactor.

Its subcellular location is the cytoplasm. The enzyme catalyses a primary alcohol + NADP(+) = an aldehyde + NADPH + H(+). Functionally, active on a wide variety of primary alcohols and their corresponding aldehydes, but not against ketones nor secondary alcohols. Active on aliphatic compounds up to 5 carbons in length and aromatic alcohols, less effective on branched-chain primary alcohols. Prefers NADPH to NADH. Its catalytic efficiency is greatest for aldehydes, suggesting the reduction of aromatic and medium-chain aliphatic aldehydes is its in vivo activity. Plays a role in tolerance to internally produced ethanol. This is Aldehyde reductase AdhA from Synechocystis sp. (strain ATCC 27184 / PCC 6803 / Kazusa).